A 250-amino-acid chain; its full sequence is 3-deoxy-manno-octulosonate cytidylyltransferase (250 aa).

The protein belongs to the KdsB family.

The protein localises to the cytoplasm. It carries out the reaction 3-deoxy-alpha-D-manno-oct-2-ulosonate + CTP = CMP-3-deoxy-beta-D-manno-octulosonate + diphosphate. Its pathway is nucleotide-sugar biosynthesis; CMP-3-deoxy-D-manno-octulosonate biosynthesis; CMP-3-deoxy-D-manno-octulosonate from 3-deoxy-D-manno-octulosonate and CTP: step 1/1. The protein operates within bacterial outer membrane biogenesis; lipopolysaccharide biosynthesis. Functionally, activates KDO (a required 8-carbon sugar) for incorporation into bacterial lipopolysaccharide in Gram-negative bacteria. In Bacteroides thetaiotaomicron (strain ATCC 29148 / DSM 2079 / JCM 5827 / CCUG 10774 / NCTC 10582 / VPI-5482 / E50), this protein is 3-deoxy-manno-octulosonate cytidylyltransferase.